The primary structure comprises 313 residues: Homoserine O-succinyltransferase (313 aa).

Residue cysteine 142 is the Acyl-thioester intermediate of the active site. Substrate contacts are provided by lysine 163 and serine 192. Residue histidine 235 is the Proton acceptor of the active site. Residue glutamate 237 is part of the active site. Arginine 249 contributes to the substrate binding site.

Belongs to the MetA family.

Its subcellular location is the cytoplasm. It catalyses the reaction L-homoserine + succinyl-CoA = O-succinyl-L-homoserine + CoA. The protein operates within amino-acid biosynthesis; L-methionine biosynthesis via de novo pathway; O-succinyl-L-homoserine from L-homoserine: step 1/1. Its function is as follows. Transfers a succinyl group from succinyl-CoA to L-homoserine, forming succinyl-L-homoserine. The protein is Homoserine O-succinyltransferase of Vibrio atlanticus (strain LGP32) (Vibrio splendidus (strain Mel32)).